The primary structure comprises 292 residues: Protease HtpX homolog (292 aa).

Helical transmembrane passes span 4-24 and 42-62; these read IFLF…TLRL and ALLV…LAMS. Histidine 147 is a Zn(2+) binding site. Residue glutamate 148 is part of the active site. Residue histidine 151 coordinates Zn(2+). The next 2 membrane-spanning stretches (helical) occupy residues 158–178 and 198–218; these read VTLA…SRII and FVTS…IVMW. Residue glutamate 224 participates in Zn(2+) binding.

Belongs to the peptidase M48B family. It depends on Zn(2+) as a cofactor.

The protein localises to the cell inner membrane. This chain is Protease HtpX homolog, found in Nitrosomonas eutropha (strain DSM 101675 / C91 / Nm57).